Reading from the N-terminus, the 366-residue chain is tRNA/tmRNA (uracil-C(5))-methyltransferase (366 aa).

Positions 190, 218, 223, 239, and 299 each coordinate S-adenosyl-L-methionine. The active-site Nucleophile is Cys324. The active-site Proton acceptor is Glu358.

The protein belongs to the class I-like SAM-binding methyltransferase superfamily. RNA M5U methyltransferase family. TrmA subfamily.

The catalysed reaction is uridine(54) in tRNA + S-adenosyl-L-methionine = 5-methyluridine(54) in tRNA + S-adenosyl-L-homocysteine + H(+). It carries out the reaction uridine(341) in tmRNA + S-adenosyl-L-methionine = 5-methyluridine(341) in tmRNA + S-adenosyl-L-homocysteine + H(+). In terms of biological role, dual-specificity methyltransferase that catalyzes the formation of 5-methyluridine at position 54 (m5U54) in all tRNAs, and that of position 341 (m5U341) in tmRNA (transfer-mRNA). The protein is tRNA/tmRNA (uracil-C(5))-methyltransferase of Salmonella choleraesuis (strain SC-B67).